The chain runs to 306 residues: Glutaminase (306 aa).

Residues S64, N115, E159, N166, Y190, Y242, and V260 each contribute to the substrate site.

It belongs to the glutaminase family. As to quaternary structure, homotetramer.

It catalyses the reaction L-glutamine + H2O = L-glutamate + NH4(+). The sequence is that of Glutaminase from Photobacterium profundum (strain SS9).